We begin with the raw amino-acid sequence, 88 residues long: Small ribosomal subunit protein bS18B (88 aa).

It belongs to the bacterial ribosomal protein bS18 family. In terms of assembly, part of the 30S ribosomal subunit. Forms a tight heterodimer with protein bS6.

Its function is as follows. Binds as a heterodimer with protein bS6 to the central domain of the 16S rRNA, where it helps stabilize the platform of the 30S subunit. The polypeptide is Small ribosomal subunit protein bS18B (rpsR2) (Mycobacterium bovis (strain ATCC BAA-935 / AF2122/97)).